The primary structure comprises 92 residues: Signal recognition particle 19 kDa protein (92 aa).

This sequence belongs to the SRP19 family. Part of the signal recognition particle protein translocation system, which is composed of SRP and FtsY. Archaeal SRP consists of a 7S RNA molecule of 300 nucleotides and two protein subunits: SRP54 and SRP19.

It is found in the cytoplasm. In terms of biological role, involved in targeting and insertion of nascent membrane proteins into the cytoplasmic membrane. Binds directly to 7S RNA and mediates binding of the 54 kDa subunit of the SRP. This chain is Signal recognition particle 19 kDa protein, found in Haloarcula marismortui (strain ATCC 43049 / DSM 3752 / JCM 8966 / VKM B-1809) (Halobacterium marismortui).